A 40-amino-acid chain; its full sequence is Snaclec tokaracetin subunit alpha (40 aa).

The C-type lectin domain occupies 1–40 (DCPSGWSSFKQYCYKPFKQLKTWEDAERFCLEQVKGAHLV). C2 and C13 are disulfide-bonded.

Belongs to the snaclec family. Heterodimer of subunits alpha and beta; disulfide-linked. As to expression, expressed by the venom gland.

It localises to the secreted. Its function is as follows. Platelet antagonist that specifically and reversibly binds to a site on platelet glycoprotein Ibalpha (GP1BA) close to or identical with the site for vWF binding. It inhibits the binding of vWF to platelets and vWF-dependent shear-induced platelet aggregation. The sequence is that of Snaclec tokaracetin subunit alpha from Protobothrops tokarensis (Tokara habu).